A 493-amino-acid polypeptide reads, in one-letter code: Ribosomal protein uS12 methylthiotransferase RimO (493 aa).

Positions R5–N121 constitute an MTTase N-terminal domain. [4Fe-4S] cluster is bound by residues C14, C50, and C84. Positions L153–R177 are disordered. Positions L179 to R410 constitute a Radical SAM core domain. 3 residues coordinate [4Fe-4S] cluster: C193, C197, and C200. In terms of domain architecture, TRAM spans D412–L482.

It belongs to the methylthiotransferase family. RimO subfamily. The cofactor is [4Fe-4S] cluster.

Its subcellular location is the cytoplasm. The catalysed reaction is L-aspartate(89)-[ribosomal protein uS12]-hydrogen + (sulfur carrier)-SH + AH2 + 2 S-adenosyl-L-methionine = 3-methylsulfanyl-L-aspartate(89)-[ribosomal protein uS12]-hydrogen + (sulfur carrier)-H + 5'-deoxyadenosine + L-methionine + A + S-adenosyl-L-homocysteine + 2 H(+). Catalyzes the methylthiolation of an aspartic acid residue of ribosomal protein uS12. The chain is Ribosomal protein uS12 methylthiotransferase RimO from Streptomyces coelicolor (strain ATCC BAA-471 / A3(2) / M145).